The primary structure comprises 292 residues: Diaminopimelate epimerase (292 aa).

2 residues coordinate substrate: N14 and N81. C90 serves as the catalytic Proton donor. Residues 91 to 92 (GN), N166, N202, and 220 to 221 (ER) contribute to the substrate site. C229 acts as the Proton acceptor in catalysis. 230-231 (GT) contributes to the substrate binding site.

It belongs to the diaminopimelate epimerase family. Homodimer.

The protein localises to the cytoplasm. The catalysed reaction is (2S,6S)-2,6-diaminopimelate = meso-2,6-diaminopimelate. It participates in amino-acid biosynthesis; L-lysine biosynthesis via DAP pathway; DL-2,6-diaminopimelate from LL-2,6-diaminopimelate: step 1/1. Catalyzes the stereoinversion of LL-2,6-diaminopimelate (L,L-DAP) to meso-diaminopimelate (meso-DAP), a precursor of L-lysine and an essential component of the bacterial peptidoglycan. This is Diaminopimelate epimerase from Rhodococcus erythropolis (strain PR4 / NBRC 100887).